Here is a 236-residue protein sequence, read N- to C-terminus: Eukaryotic translation initiation factor 3 subunit J (236 aa).

The segment at 1–84 (MADDWESAAD…LREEEAEAER (84 aa)) is disordered. Acidic residues predominate over residues 28-46 (GEDEDEDIKDSWEDEEEKK). Basic and acidic residues-rich tracts occupy residues 47 to 58 (DEEKPTKTEAPA) and 68 to 77 (AKLEQQALRE).

Belongs to the eIF-3 subunit J family. In terms of assembly, component of the eukaryotic translation initiation factor 3 (eIF-3) complex. The eIF-3 complex interacts with pix.

The protein localises to the cytoplasm. Component of the eukaryotic translation initiation factor 3 (eIF-3) complex, which is involved in protein synthesis of a specialized repertoire of mRNAs and, together with other initiation factors, stimulates binding of mRNA and methionyl-tRNAi to the 40S ribosome. The eIF-3 complex specifically targets and initiates translation of a subset of mRNAs involved in cell proliferation. The sequence is that of Eukaryotic translation initiation factor 3 subunit J from Drosophila sechellia (Fruit fly).